A 288-amino-acid polypeptide reads, in one-letter code: Alpha/beta hydrolase domain-containing protein 17B (288 aa).

Residues S170, D235, and H264 each act as charge relay system in the active site. The residue at position 282 (S282) is a Phosphoserine.

It belongs to the AB hydrolase superfamily. ABHD17 family. Post-translationally, palmitoylated on cysteine residues located in a cysteine cluster at the N-terminus which promotes membrane localization. Palmitoylation is required for post-synaptic localization and for depalmitoylating activity towards DLG4/PSD95.

The protein localises to the cell membrane. Its subcellular location is the recycling endosome membrane. The protein resides in the cell projection. It is found in the dendritic spine. It localises to the postsynaptic density membrane. The enzyme catalyses S-hexadecanoyl-L-cysteinyl-[protein] + H2O = L-cysteinyl-[protein] + hexadecanoate + H(+). Its activity is regulated as follows. Inhibited by palmostatin-B. Functionally, hydrolyzes fatty acids from S-acylated cysteine residues in proteins. Has depalmitoylating activity towards DLG4/PSD95. Has depalmitoylating activity towards GAP43. Has depalmitoylating activity towards MAP6. Has depalmitoylating activity towards NRAS. This Homo sapiens (Human) protein is Alpha/beta hydrolase domain-containing protein 17B.